Here is a 469-residue protein sequence, read N- to C-terminus: 6-phospho-beta-galactosidase (469 aa).

Positions 19, 116, 159, 160, and 297 each coordinate D-galactose 6-phosphate. The active-site Proton donor is Glu160. Glu375 functions as the Nucleophile in the catalytic mechanism. Positions 428, 429, 435, and 437 each coordinate D-galactose 6-phosphate.

Belongs to the glycosyl hydrolase 1 family.

The enzyme catalyses a 6-phospho-beta-D-galactoside + H2O = D-galactose 6-phosphate + an alcohol. Its pathway is carbohydrate metabolism; lactose degradation; D-galactose 6-phosphate and beta-D-glucose from lactose 6-phosphate: step 1/1. In Streptococcus equi subsp. zooepidemicus (strain MGCS10565), this protein is 6-phospho-beta-galactosidase.